A 430-amino-acid polypeptide reads, in one-letter code: Adenylosuccinate synthetase (430 aa).

Residues 12–18 (GDEGKGK) and 40–42 (GHT) contribute to the GTP site. The active-site Proton acceptor is the Asp13. The Mg(2+) site is built by Asp13 and Gly40. Residues 13–16 (DEGK), 38–41 (NAGH), Thr128, Arg142, Gln223, Thr238, and Arg302 contribute to the IMP site. Catalysis depends on His41, which acts as the Proton donor. 298–304 (TTTGRPR) contacts substrate. Residues Arg304, 330-332 (SID), and 412-414 (SVG) each bind GTP.

It belongs to the adenylosuccinate synthetase family. As to quaternary structure, homodimer. Mg(2+) is required as a cofactor.

It localises to the cytoplasm. It catalyses the reaction IMP + L-aspartate + GTP = N(6)-(1,2-dicarboxyethyl)-AMP + GDP + phosphate + 2 H(+). Its pathway is purine metabolism; AMP biosynthesis via de novo pathway; AMP from IMP: step 1/2. In terms of biological role, plays an important role in the de novo pathway of purine nucleotide biosynthesis. Catalyzes the first committed step in the biosynthesis of AMP from IMP. The polypeptide is Adenylosuccinate synthetase (Streptococcus uberis (strain ATCC BAA-854 / 0140J)).